The primary structure comprises 116 residues: Large ribosomal subunit protein bL17 (116 aa).

It belongs to the bacterial ribosomal protein bL17 family. In terms of assembly, part of the 50S ribosomal subunit. Contacts protein L32.

In Fusobacterium nucleatum subsp. nucleatum (strain ATCC 25586 / DSM 15643 / BCRC 10681 / CIP 101130 / JCM 8532 / KCTC 2640 / LMG 13131 / VPI 4355), this protein is Large ribosomal subunit protein bL17.